Reading from the N-terminus, the 1070-residue chain is Carbamoyl phosphate synthase large chain (1070 aa).

Positions 1–399 (MPKREDIKKV…SLLKAFKSLD (399 aa)) are carboxyphosphate synthetic domain. Residues Arg-129, Arg-169, Gly-175, Gly-176, Glu-208, Val-210, Glu-215, Gly-241, Val-242, His-243, Gln-284, and Glu-296 each contribute to the ATP site. The ATP-grasp 1 domain occupies 133–325 (KETMLRIGEK…IARVTAKIAI (193 aa)). Gln-284, Glu-296, and Asn-298 together coordinate Mg(2+). Positions 284, 296, and 298 each coordinate Mn(2+). Residues 400–540 (IDSQLGNKRW…YSTYEDTCET (141 aa)) are oligomerization domain. A carbamoyl phosphate synthetic domain region spans residues 541–931 (NPTDRKKILI…YKAELAADNL (391 aa)). The ATP-grasp 2 domain maps to 672 to 863 (YVLMQKFGIL…LAKIAARVIA (192 aa)). ATP is bound by residues Arg-708, Asp-747, Leu-749, Glu-754, Gly-779, Val-780, His-781, Ser-782, Gln-822, and Glu-834. Mg(2+) is bound by residues Gln-822, Glu-834, and Asn-836. Mn(2+)-binding residues include Gln-822, Glu-834, and Asn-836. The 141-residue stretch at 930–1070 (NLLPLTGKVF…INEYHKEMGL (141 aa)) folds into the MGS-like domain. The interval 932 to 1070 (LPLTGKVFLS…INEYHKEMGL (139 aa)) is allosteric domain.

Belongs to the CarB family. As to quaternary structure, composed of two chains; the small (or glutamine) chain promotes the hydrolysis of glutamine to ammonia, which is used by the large (or ammonia) chain to synthesize carbamoyl phosphate. Tetramer of heterodimers (alpha,beta)4. The cofactor is Mg(2+). Mn(2+) is required as a cofactor.

The enzyme catalyses hydrogencarbonate + L-glutamine + 2 ATP + H2O = carbamoyl phosphate + L-glutamate + 2 ADP + phosphate + 2 H(+). It catalyses the reaction hydrogencarbonate + NH4(+) + 2 ATP = carbamoyl phosphate + 2 ADP + phosphate + 2 H(+). It functions in the pathway amino-acid biosynthesis; L-arginine biosynthesis; carbamoyl phosphate from bicarbonate: step 1/1. The protein operates within pyrimidine metabolism; UMP biosynthesis via de novo pathway; (S)-dihydroorotate from bicarbonate: step 1/3. Its function is as follows. Large subunit of the glutamine-dependent carbamoyl phosphate synthetase (CPSase). CPSase catalyzes the formation of carbamoyl phosphate from the ammonia moiety of glutamine, carbonate, and phosphate donated by ATP, constituting the first step of 2 biosynthetic pathways, one leading to arginine and/or urea and the other to pyrimidine nucleotides. The large subunit (synthetase) binds the substrates ammonia (free or transferred from glutamine from the small subunit), hydrogencarbonate and ATP and carries out an ATP-coupled ligase reaction, activating hydrogencarbonate by forming carboxy phosphate which reacts with ammonia to form carbamoyl phosphate. The chain is Carbamoyl phosphate synthase large chain from Methanosarcina acetivorans (strain ATCC 35395 / DSM 2834 / JCM 12185 / C2A).